The chain runs to 220 residues: MELYLDTANVAEVERLAHIFPIAGVTTNPSIVAASKESIWDVLPRLQNAIGEEGTLFAQTMSRDAKGMVEEAKRLNNAIPGIVVKIPVTAEGLAAIKLLKKEGIVTLGTAVYSASQGLLAALAGAKYVAPYVNRVDAQGGDGIRMVQELQTLLEHHAPDSMVLAASFKTPRQALDCLLAGCQAITLPLDVAQQMLNTPAVESAIEKFEQDWKNAFGNLNL.

Catalysis depends on Lys85, which acts as the Schiff-base intermediate with substrate.

Belongs to the transaldolase family. Type 3A subfamily. Homodecamer.

The protein resides in the cytoplasm. It carries out the reaction beta-D-fructose 6-phosphate = dihydroxyacetone + D-glyceraldehyde 3-phosphate. Catalyzes the reversible formation of fructose 6-phosphate from dihydroxyacetone and D-glyceraldehyde 3-phosphate via an aldolization reaction. This is Fructose-6-phosphate aldolase from Salmonella heidelberg (strain SL476).